The chain runs to 492 residues: N-succinylglutamate 5-semialdehyde dehydrogenase (492 aa).

220–225 (GSASTG) lines the NAD(+) pocket. Active-site residues include Glu-243 and Cys-277.

The protein belongs to the aldehyde dehydrogenase family. AstD subfamily.

The catalysed reaction is N-succinyl-L-glutamate 5-semialdehyde + NAD(+) + H2O = N-succinyl-L-glutamate + NADH + 2 H(+). The protein operates within amino-acid degradation; L-arginine degradation via AST pathway; L-glutamate and succinate from L-arginine: step 4/5. In terms of biological role, catalyzes the NAD-dependent reduction of succinylglutamate semialdehyde into succinylglutamate. This Salmonella paratyphi B (strain ATCC BAA-1250 / SPB7) protein is N-succinylglutamate 5-semialdehyde dehydrogenase.